The primary structure comprises 688 residues: MGEKRTIIKALKNSAASHFIKKLTADTSLSSIQEAINVVQQYNATDPVRLKLFHTPRMVSQGAHFAFCLPTKKPHYKPLLLSQNALDEFNLVQDQDLEKILSGEKVYYSDSIFPYSTVYSGFQFGSFAAQLGDGRVVNLFDLKDKCSGQWQTFQLKGAGMTPFSRFADGKAVLRSSIREFIMSEALHSIGIPSTRAMQLTLLPGTKAQRRNQEPCAVVCRFAPSWIRLGNFNLFRWRHDLKGLIQLSDYCIEELFAGGTQFEGKPDFNIFKRDFFPDTETKIDEQVEKDETEVSTMTGDNISTLSKYDEFFRHVVSLNANTVAHWQAYGFANGVLNTDNTSIMGLTIDYGPFAFLDKFEPSFTPNHDDTAKRYSFANQPSIIWWNLQQFAKDLACLLGPEARDLELLLKGELNSVDDALEKTMIERVQKLVELSANEYKYVFTTRYAQIMSQRLGVDLDLEKCMSSTNLKDIEHAAEKAKEFCDVIVEPLLDILQATKVDYNNFFIHLQNYKGPFFIKDKSDTATLFGAFDEEYLGMFFNSKQLQQMAETEEAFAAGEKVFDANGELRLLNEKLQEIRNWTQDYLTLVPPTETAARASLAKKANPLFVPRSWVLEEVVDDLMYSQRDGLQDPSSELDTSALKKLYLMSVNPYDRTKWDVTLRPELETKWADLSHQDDAKFMMQASCSS.

The transit peptide at 1–23 (MGEKRTIIKALKNSAASHFIKKL) directs the protein to the mitochondrion. Residues Gly-132, Gly-134, Arg-135, Lys-156, Asp-168, Gly-169, Arg-220, and Arg-227 each coordinate ATP. The active-site Proton acceptor is the Asp-338. 2 residues coordinate Mg(2+): Asn-339 and Asp-348. Asp-348 is a binding site for ATP.

Belongs to the SELO family. The cofactor is Mg(2+). In terms of processing, forms probably one or more intrachain disulfide bridges.

The protein resides in the mitochondrion. It catalyses the reaction L-tyrosyl-[protein] + ATP = O-(5'-adenylyl)-L-tyrosyl-[protein] + diphosphate. Functionally, catalyzes the transfer of adenosine 5'-monophosphate (AMP) to Tyr residues of target mitochondrial proteins (AMPylation). Involved in redox homeostasis by regulating the cellular response to oxidative stress. Regulates protein S-glutathionylation levels possibly by AMPylation of deglutathionylation enzymes such as glutaredoxins. The protein is Protein adenylyltransferase SelO, mitochondrial of Saccharomyces cerevisiae (strain ATCC 204508 / S288c) (Baker's yeast).